The sequence spans 142 residues: Protein E6 (142 aa).

2 zinc fingers span residues 27–63 (CIFC…CTKC) and 100–136 (CQHC…CRNC).

It belongs to the papillomaviridae E6 protein family. Forms homodimers. Interacts with ubiquitin-protein ligase UBE3A/E6-AP; this interaction stimulates UBE3A ubiquitin activity. Interacts with host BAK1.

The protein localises to the host cytoplasm. The protein resides in the host nucleus. Plays a major role in the induction and maintenance of cellular transformation. E6 associates with host UBE3A/E6-AP ubiquitin-protein ligase and modulates its activity. Protects host keratinocytes from apoptosis by mediating the degradation of host BAK1. May also inhibit host immune response. This Homo sapiens (Human) protein is Protein E6.